The primary structure comprises 163 residues: Centrosomal protein of 19 kDa (163 aa).

It belongs to the CEP19 family. As to quaternary structure, interacts with CEP43; this interaction is required for its localization to the mother centriole. Interacts (via residues 121-150) with RABL2B. Interacts (via C-terminus) with CEP350; this interaction is required for its localization to the mother centriole.

The protein resides in the cytoplasm. Its subcellular location is the cytoskeleton. The protein localises to the microtubule organizing center. It localises to the centrosome. It is found in the centriole. The protein resides in the spindle pole. Its subcellular location is the cilium basal body. In terms of biological role, required for ciliation. Recruits the RABL2B GTPase to the ciliary base to initiate ciliation. After specifically capturing the activated GTP-bound RABL2B, the CEP19-RABL2B complex binds intraflagellar transport (IFT) complex B from the large pool pre-docked at the base of the cilium and thus triggers its entry into the cilia. Involved in the early steps in cilia formation by recruiting the ciliary vesicles (CVs) to the distal end of the mother centriole where they fuse to initiate cilium assembly. Involved in microtubule (MT) anchoring to the centrosomes. The chain is Centrosomal protein of 19 kDa (CEP19) from Homo sapiens (Human).